Here is a 516-residue protein sequence, read N- to C-terminus: tRNA-guanine(15) transglycosylase (516 aa).

Asp93 serves as the catalytic Nucleophile. Substrate is bound by residues Asp128 and Ala196. The Zn(2+) site is built by Cys279, Cys281, and Cys284. Positions 488 to 502 are enriched in low complexity; that stretch reads LSAVSERLGDEASVG. The tract at residues 488-516 is disordered; the sequence is LSAVSERLGDEASVGGDDGDDGGSASSAE.

Belongs to the archaeosine tRNA-ribosyltransferase family. Requires Zn(2+) as cofactor.

It carries out the reaction guanosine(15) in tRNA + 7-cyano-7-deazaguanine = 7-cyano-7-carbaguanosine(15) in tRNA + guanine. It participates in tRNA modification; archaeosine-tRNA biosynthesis. Exchanges the guanine residue with 7-cyano-7-deazaguanine (preQ0) at position 15 in the dihydrouridine loop (D-loop) of archaeal tRNAs. The chain is tRNA-guanine(15) transglycosylase from Haloferax volcanii (strain ATCC 29605 / DSM 3757 / JCM 8879 / NBRC 14742 / NCIMB 2012 / VKM B-1768 / DS2) (Halobacterium volcanii).